A 327-amino-acid polypeptide reads, in one-letter code: tRNA-modifying protein YgfZ (327 aa).

Residues Trp-27 and Trp-189 each contribute to the folate site.

It belongs to the tRNA-modifying YgfZ family.

It is found in the cytoplasm. Its function is as follows. Folate-binding protein involved in regulating the level of ATP-DnaA and in the modification of some tRNAs. It is probably a key factor in regulatory networks that act via tRNA modification, such as initiation of chromosomal replication. This Klebsiella pneumoniae (strain 342) protein is tRNA-modifying protein YgfZ.